We begin with the raw amino-acid sequence, 955 residues long: Kinesin-like protein NACK2 (955 aa).

A Kinesin motor domain is found at 36 to 357 (KILVTIRVRP…LCFATSAKEV (322 aa)). Position 120–127 (120–127 (GQTSSGKT)) interacts with ATP. Coiled-coil stretches lie at residues 366–443 (VVAE…LKGS) and 566–604 (KASLKEEIARLRSQESNIASLEQKLENVQRSIDELVMHL).

It belongs to the TRAFAC class myosin-kinesin ATPase superfamily. Kinesin family. KIN-7 subfamily.

The protein resides in the cytoplasm. It is found in the nucleus. Its subcellular location is the cytoskeleton. It localises to the phragmoplast. In terms of biological role, probable plus end-directed motor protein that may function in the NACK-PQR (NPK1-NQK1/MEK1-NRK1) MAP kinase signaling pathway, which is essential for somatic cell cytokinesis, especially for the cell-plate formation and its expansion. May regulate the activity and the localization of NPK1, probably by association through the non-catalytic region of the kinase. The sequence is that of Kinesin-like protein NACK2 (NACK2) from Nicotiana tabacum (Common tobacco).